The chain runs to 660 residues: Acetyl-coenzyme A synthetase (660 aa).

CoA is bound by residues 197 to 200 (RGGK) and T317. ATP is bound by residues 397–399 (GEP), 421–426 (DTWWQT), D512, and R528. S536 is a CoA binding site. R539 serves as a coordination point for ATP. Positions 550, 552, and 555 each coordinate Mg(2+). K625 is subject to N6-acetyllysine.

This sequence belongs to the ATP-dependent AMP-binding enzyme family. The cofactor is Mg(2+). Post-translationally, acetylated. Deacetylation by the SIR2-homolog deacetylase activates the enzyme.

The enzyme catalyses acetate + ATP + CoA = acetyl-CoA + AMP + diphosphate. Catalyzes the conversion of acetate into acetyl-CoA (AcCoA), an essential intermediate at the junction of anabolic and catabolic pathways. AcsA undergoes a two-step reaction. In the first half reaction, AcsA combines acetate with ATP to form acetyl-adenylate (AcAMP) intermediate. In the second half reaction, it can then transfer the acetyl group from AcAMP to the sulfhydryl group of CoA, forming the product AcCoA. In Burkholderia mallei (strain NCTC 10247), this protein is Acetyl-coenzyme A synthetase.